A 320-amino-acid chain; its full sequence is ATP-dependent 6-phosphofructokinase (320 aa).

Gly-12 is a binding site for ATP. Residue 22–26 (RGVVR) coordinates ADP. Residues 73–74 (RF) and 103–106 (GDGS) contribute to the ATP site. Residue Asp-104 participates in Mg(2+) binding. 126-128 (TID) lines the substrate pocket. Residue Asp-128 is the Proton acceptor of the active site. Position 155 (Arg-155) interacts with ADP. Substrate-binding positions include Arg-163 and 170 to 172 (MGR). Residues 186–188 (GCE), Lys-212, and 214–216 (KKH) contribute to the ADP site. Residues Glu-223, Arg-244, and 250-253 (HIQR) each bind substrate.

Belongs to the phosphofructokinase type A (PFKA) family. ATP-dependent PFK group I subfamily. Prokaryotic clade 'B1' sub-subfamily. In terms of assembly, homotetramer. Requires Mg(2+) as cofactor.

Its subcellular location is the cytoplasm. The enzyme catalyses beta-D-fructose 6-phosphate + ATP = beta-D-fructose 1,6-bisphosphate + ADP + H(+). It participates in carbohydrate degradation; glycolysis; D-glyceraldehyde 3-phosphate and glycerone phosphate from D-glucose: step 3/4. Allosterically activated by ADP and other diphosphonucleosides, and allosterically inhibited by phosphoenolpyruvate. Functionally, catalyzes the phosphorylation of D-fructose 6-phosphate to fructose 1,6-bisphosphate by ATP, the first committing step of glycolysis. This Aliivibrio fischeri (strain ATCC 700601 / ES114) (Vibrio fischeri) protein is ATP-dependent 6-phosphofructokinase.